We begin with the raw amino-acid sequence, 228 residues long: Large ribosomal subunit protein uL16 (228 aa).

This sequence belongs to the universal ribosomal protein uL16 family. As to quaternary structure, component of the small ribosomal subunit. Mature ribosomes consist of a small (40S) and a large (60S) subunit. The 40S subunit contains about 33 different proteins and 1 molecule of RNA (18S). The 60S subunit contains about 49 different proteins and 3 molecules of RNA (25S, 5.8S and 5S).

The polypeptide is Large ribosomal subunit protein uL16 (RPL10) (Pinus taeda (Loblolly pine)).